The primary structure comprises 265 residues: Cell division protein DivIB (265 aa).

Over 1–33 (MRMELKMMGNVNKSNKTNEYILRRHKKKRKKKL) the chain is Cytoplasmic. The chain crosses the membrane as a helical span at residues 34–54 (IIFSILLISILVTLCFKHPFF). One can recognise a POTRA domain in the interval 54–122 (FNVKIVEVKD…NKIVIHIKER (69 aa)). At 55–265 (NVKIVEVKDN…FKGNPVVFIK (211 aa)) the chain is on the extracellular side.

It belongs to the FtsQ/DivIB family. DivIB subfamily.

It localises to the cell membrane. Functionally, cell division protein that may be involved in stabilizing or promoting the assembly of the division complex. In Clostridium tetani (strain Massachusetts / E88), this protein is Cell division protein DivIB.